The primary structure comprises 502 residues: MNFLVLFFSYSIFVLPYSILVYGISKDRKCCEYGNSVDSSKILYIAGSVRKRRKTFEKKINVSNFEREGNANGYKHIDNKGIYATKQNLEFDEARNKEANENNKNDATTVNRKIIIESENKNNHNNQEQNIKDCYTNENAQNDEKNKKVKIPKVGNAMPEKKPDWFHVPAPNGEKYKKLKSDLGKLKLHTVCEEAQCPNIGECWNIGTATIMLLGDTCTRGCKFCSIKTSSKPPPPDINEPFNTAKAICEWDINYIVITSVDRDDLPDGGADHFAKTVELIKFSKPSILIECLVSDFQGNIDSIKRLALSGLDVYAHNIETVKRLQKYVRDKRANYEQSLYVLKKAKEINPNLYTKTSIMLGLGETQDEVLQTMKDARSNDIDVITFGQYLRPTKNHLNVVEYISPQMFNYYKDVGLKMGFKYIASGPLVRSSYMAGEYFMKNMVEKGRNQKNQQIKPVELKLVTELDKLTECIQKEIKHREISVFIQVHAFLVNVFVLVRA.

Positions 1–16 (MNFLVLFFSYSIFVLP) are cleaved as a signal peptide. Cys192, Cys197, Cys203, Cys218, Cys222, Cys225, and Ser433 together coordinate [4Fe-4S] cluster. The 219-residue stretch at 204–422 (WNIGTATIML…KDVGLKMGFK (219 aa)) folds into the Radical SAM core domain.

The protein belongs to the radical SAM superfamily. Lipoyl synthase family. It depends on [4Fe-4S] cluster as a cofactor.

It localises to the plastid. The protein localises to the apicoplast. It catalyses the reaction [[Fe-S] cluster scaffold protein carrying a second [4Fe-4S](2+) cluster] + N(6)-octanoyl-L-lysyl-[protein] + 2 oxidized [2Fe-2S]-[ferredoxin] + 2 S-adenosyl-L-methionine + 4 H(+) = [[Fe-S] cluster scaffold protein] + N(6)-[(R)-dihydrolipoyl]-L-lysyl-[protein] + 4 Fe(3+) + 2 hydrogen sulfide + 2 5'-deoxyadenosine + 2 L-methionine + 2 reduced [2Fe-2S]-[ferredoxin]. Its pathway is protein modification; protein lipoylation via endogenous pathway; protein N(6)-(lipoyl)lysine from octanoyl-[acyl-carrier-protein]: step 2/2. In terms of biological role, catalyzes the radical-mediated insertion of two sulfur atoms into the C-6 and C-8 positions of the octanoyl moiety bound to the lipoyl domains of lipoate-dependent enzymes, thereby converting the octanoylated domains into lipoylated derivatives. In Plasmodium yoelii yoelii, this protein is Lipoyl synthase, apicoplast.